We begin with the raw amino-acid sequence, 95 residues long: CRISPR-associated endoribonuclease Cas2 (95 aa).

Asp9 contributes to the Mg(2+) binding site.

This sequence belongs to the CRISPR-associated endoribonuclease Cas2 protein family. Homodimer, forms a heterotetramer with a Cas1 homodimer. Mg(2+) serves as cofactor.

Its function is as follows. CRISPR (clustered regularly interspaced short palindromic repeat), is an adaptive immune system that provides protection against mobile genetic elements (viruses, transposable elements and conjugative plasmids). CRISPR clusters contain sequences complementary to antecedent mobile elements and target invading nucleic acids. CRISPR clusters are transcribed and processed into CRISPR RNA (crRNA). Functions as a ssRNA-specific endoribonuclease. Involved in the integration of spacer DNA into the CRISPR cassette. The polypeptide is CRISPR-associated endoribonuclease Cas2 (Methylorubrum extorquens (strain CM4 / NCIMB 13688) (Methylobacterium extorquens)).